A 252-amino-acid chain; its full sequence is Uracil-DNA glycosylase (252 aa).

D87 acts as the Proton acceptor in catalysis.

The protein belongs to the uracil-DNA glycosylase (UDG) superfamily. UNG family.

It localises to the host nucleus. It catalyses the reaction Hydrolyzes single-stranded DNA or mismatched double-stranded DNA and polynucleotides, releasing free uracil.. In terms of biological role, excises uracil residues from the DNA which can arise as a result of misincorporation of dUMP residues by DNA polymerase or deamination of cytosines. Therefore may reduce deleterious uracil incorporation into the viral genome, particularly in terminally differentiated cells which lack DNA repair enzymes. The sequence is that of Uracil-DNA glycosylase (46) from Saimiri sciureus (Common squirrel monkey).